Reading from the N-terminus, the 350-residue chain is Guanine nucleotide-binding protein G(t) subunit alpha-1 (350 aa).

The interval 1–21 (MGAGASAEEKHSRELEKKLKE) is disordered. G2 carries the N-myristoyl glycine lipid modification. The span at 7–21 (AEEKHSRELEKKLKE) shows a compositional bias: basic and acidic residues. Residues 28–350 (RTVKLLLLGA…KENLKDCGLF (323 aa)) enclose the G-alpha domain. The segment at 31-44 (KLLLLGAGESGKST) is G1 motif. A GTP-binding site is contributed by 36-43 (GAGESGKS). S43 contributes to the Mg(2+) binding site. Y142 bears the Phosphotyrosine; by SRC mark. GTP is bound by residues D146, 171 to 177 (LRSRVKT), G199, 265 to 268 (NKKD), and A322. Residues 169–177 (DVLRSRVKT) are G2 motif. R174 is modified (ADP-ribosylarginine; by cholera toxin). T177 is a Mg(2+) binding site. Residues 192–201 (FRMFDVGGQR) are G3 motif. Positions 261-268 (VLFLNKKD) are G4 motif. The segment at 320–325 (TCATDT) is G5 motif. The interaction with RHO stretch occupies residues 340–350 (IKENLKDCGLF). At C347 the chain carries ADP-ribosylcysteine; by pertussis toxin.

Belongs to the G-alpha family. G(i/o/t/z) subfamily. In terms of assembly, heterotrimeric G proteins are composed of 3 subunits alpha, beta and gamma. The alpha chain contains the guanine nucleotide binding site. Interacts with RHO. Interacts with RGS9 and PDE6G. Interacts (when myristoylated) with UNC119; interaction is required for localization in sensory neurons. As to expression, rod photoreceptor cells. Predominantly expressed in the retina followed by the ciliary body, iris and retinal pigment epithelium.

The protein resides in the cell projection. Its subcellular location is the cilium. It localises to the photoreceptor outer segment. It is found in the membrane. The protein localises to the photoreceptor inner segment. In terms of biological role, functions as a signal transducer for the rod photoreceptor RHO. Required for normal RHO-mediated light perception by the retina. Guanine nucleotide-binding proteins (G proteins) function as transducers downstream of G protein-coupled receptors (GPCRs), such as the photoreceptor RHO. The alpha chain contains the guanine nucleotide binding site and alternates between an active, GTP-bound state and an inactive, GDP-bound state. Activated RHO promotes GDP release and GTP binding. Signaling is mediated via downstream effector proteins, such as cGMP-phosphodiesterase. The chain is Guanine nucleotide-binding protein G(t) subunit alpha-1 (GNAT1) from Homo sapiens (Human).